A 616-amino-acid chain; its full sequence is Chaperone protein HscA (616 aa).

This sequence belongs to the heat shock protein 70 family.

Chaperone involved in the maturation of iron-sulfur cluster-containing proteins. Has a low intrinsic ATPase activity which is markedly stimulated by HscB. Involved in the maturation of IscU. The polypeptide is Chaperone protein HscA (Escherichia coli O45:K1 (strain S88 / ExPEC)).